A 599-amino-acid chain; its full sequence is Aspartate--tRNA(Asp/Asn) ligase (599 aa).

Glu183 serves as a coordination point for L-aspartate. An aspartate region spans residues 207-210 (QIFK). Residue Arg229 coordinates L-aspartate. Residues 229-231 (RDE) and Gln238 each bind ATP. Residue His456 participates in L-aspartate binding. An ATP-binding site is contributed by Glu490. Arg497 provides a ligand contact to L-aspartate. Position 542-545 (542-545 (GLDR)) interacts with ATP.

Belongs to the class-II aminoacyl-tRNA synthetase family. Type 1 subfamily. As to quaternary structure, homodimer.

The protein localises to the cytoplasm. The catalysed reaction is tRNA(Asx) + L-aspartate + ATP = L-aspartyl-tRNA(Asx) + AMP + diphosphate. Aspartyl-tRNA synthetase with relaxed tRNA specificity since it is able to aspartylate not only its cognate tRNA(Asp) but also tRNA(Asn). Reaction proceeds in two steps: L-aspartate is first activated by ATP to form Asp-AMP and then transferred to the acceptor end of tRNA(Asp/Asn). The sequence is that of Aspartate--tRNA(Asp/Asn) ligase from Protochlamydia amoebophila (strain UWE25).